Reading from the N-terminus, the 385-residue chain is tRNA-specific 2-thiouridylase MnmA (385 aa).

ATP-binding positions include Ala8 to Ser15 and Leu34. The Nucleophile role is filled by Cys102. A disulfide bridge links Cys102 with Cys200. Position 126 (Gly126) interacts with ATP. The interval Lys150–Gln152 is interaction with tRNA. Cys200 serves as the catalytic Cysteine persulfide intermediate. Residues Arg307–Tyr308 are interaction with tRNA.

Belongs to the MnmA/TRMU family.

The protein resides in the cytoplasm. The catalysed reaction is S-sulfanyl-L-cysteinyl-[protein] + uridine(34) in tRNA + AH2 + ATP = 2-thiouridine(34) in tRNA + L-cysteinyl-[protein] + A + AMP + diphosphate + H(+). Catalyzes the 2-thiolation of uridine at the wobble position (U34) of tRNA, leading to the formation of s(2)U34. The chain is tRNA-specific 2-thiouridylase MnmA from Heliobacterium modesticaldum (strain ATCC 51547 / Ice1).